A 334-amino-acid polypeptide reads, in one-letter code: Glutaminase (334 aa).

7 residues coordinate substrate: Ser-76, Asn-126, Glu-170, Asn-177, Tyr-201, Tyr-253, and Val-271.

The protein belongs to the glutaminase family. As to quaternary structure, homotetramer.

It carries out the reaction L-glutamine + H2O = L-glutamate + NH4(+). The chain is Glutaminase from Trichormus variabilis (strain ATCC 29413 / PCC 7937) (Anabaena variabilis).